The chain runs to 146 residues: 3-dehydroquinate dehydratase (146 aa).

Y23 acts as the Proton acceptor in catalysis. Positions 75, 81, and 88 each coordinate substrate. H101 acts as the Proton donor in catalysis. Substrate is bound by residues 102 to 103 and R112; that span reads LS.

It belongs to the type-II 3-dehydroquinase family. Homododecamer.

It carries out the reaction 3-dehydroquinate = 3-dehydroshikimate + H2O. It participates in metabolic intermediate biosynthesis; chorismate biosynthesis; chorismate from D-erythrose 4-phosphate and phosphoenolpyruvate: step 3/7. Its function is as follows. Catalyzes a trans-dehydration via an enolate intermediate. This Marinobacter nauticus (strain ATCC 700491 / DSM 11845 / VT8) (Marinobacter aquaeolei) protein is 3-dehydroquinate dehydratase.